The primary structure comprises 129 residues: MDTISQFLTMIRNAGAAKHEKVDMPASKVRAGIAQILVNEGFIRSFKVAKDSKQGIMRVYLKYDEAGGHAINNIDRVSRPGRRVYVKSDKIPTVRSGMGMSIISTSKGIMSGKQATEQKLGGELLATLW.

Belongs to the universal ribosomal protein uS8 family. As to quaternary structure, part of the 30S ribosomal subunit. Contacts proteins S5 and S12.

Functionally, one of the primary rRNA binding proteins, it binds directly to 16S rRNA central domain where it helps coordinate assembly of the platform of the 30S subunit. The chain is Small ribosomal subunit protein uS8 from Bdellovibrio bacteriovorus (strain ATCC 15356 / DSM 50701 / NCIMB 9529 / HD100).